We begin with the raw amino-acid sequence, 328 residues long: Cytochrome c biogenesis protein CcsA (328 aa).

8 consecutive transmembrane segments (helical) span residues H12–G32, G45–G65, L72–L92, F100–L120, M145–I165, T234–N254, W263–I283, and I296–G316.

This sequence belongs to the CcmF/CycK/Ccl1/NrfE/CcsA family. In terms of assembly, may interact with Ccs1.

The protein localises to the plastid. It is found in the chloroplast thylakoid membrane. In terms of biological role, required during biogenesis of c-type cytochromes (cytochrome c6 and cytochrome f) at the step of heme attachment. This is Cytochrome c biogenesis protein CcsA from Phaseolus vulgaris (Kidney bean).